Reading from the N-terminus, the 436-residue chain is Histidinol dehydrogenase (436 aa).

NAD(+)-binding residues include tyrosine 136, glutamine 198, and asparagine 221. Substrate contacts are provided by serine 244, glutamine 266, and histidine 269. The Zn(2+) site is built by glutamine 266 and histidine 269. Catalysis depends on proton acceptor residues glutamate 334 and histidine 335. 4 residues coordinate substrate: histidine 335, aspartate 368, glutamate 422, and histidine 427. Aspartate 368 is a binding site for Zn(2+). Residue histidine 427 coordinates Zn(2+).

It belongs to the histidinol dehydrogenase family. Zn(2+) serves as cofactor.

The catalysed reaction is L-histidinol + 2 NAD(+) + H2O = L-histidine + 2 NADH + 3 H(+). It functions in the pathway amino-acid biosynthesis; L-histidine biosynthesis; L-histidine from 5-phospho-alpha-D-ribose 1-diphosphate: step 9/9. In terms of biological role, catalyzes the sequential NAD-dependent oxidations of L-histidinol to L-histidinaldehyde and then to L-histidine. The chain is Histidinol dehydrogenase from Dehalococcoides mccartyi (strain ATCC BAA-2266 / KCTC 15142 / 195) (Dehalococcoides ethenogenes (strain 195)).